The primary structure comprises 218 residues: Thiopurine S-methyltransferase (218 aa).

Residues Trp-10, Leu-45, Glu-66, and Arg-123 each contribute to the S-adenosyl-L-methionine site.

Belongs to the class I-like SAM-binding methyltransferase superfamily. TPMT family.

The protein resides in the cytoplasm. The enzyme catalyses S-adenosyl-L-methionine + a thiopurine = S-adenosyl-L-homocysteine + a thiopurine S-methylether.. The polypeptide is Thiopurine S-methyltransferase (Shewanella sp. (strain MR-4)).